The sequence spans 389 residues: Ribonucleoside-diphosphate reductase subunit M2 (389 aa).

Serine 20 bears the Phosphoserine mark. At threonine 33 the chain carries Phosphothreonine. The short motif at 49 to 51 (RRI) is the Cy element. 3 residues coordinate Fe cation: aspartate 138, glutamate 169, and histidine 172. The active site involves tyrosine 176. The Fe cation site is built by glutamate 232, glutamate 266, and histidine 269.

The protein belongs to the ribonucleoside diphosphate reductase small chain family. In terms of assembly, heterodimer of a large and a small subunit. Interacts (via Cy motif and when phosphorylated at Thr-33) with CCNF; the interaction occurs exclusively in G2 and early M. Requires Fe cation as cofactor. Phosphorylation on Ser-20 relieves the inhibitory effect on Wnt signaling. Phosphorylated on Thr-33 by CDK1 and CDK2; predominantly in G2 and M phase. Post-translationally, ubiquitinated by the SCF(CCNF) E3 ubiquitin-protein ligase complex; leading to its degradation by the proteasome.

It localises to the cytoplasm. It is found in the nucleus. The enzyme catalyses a 2'-deoxyribonucleoside 5'-diphosphate + [thioredoxin]-disulfide + H2O = a ribonucleoside 5'-diphosphate + [thioredoxin]-dithiol. Its function is as follows. Provides the precursors necessary for DNA synthesis. Catalyzes the biosynthesis of deoxyribonucleotides from the corresponding ribonucleotides. Inhibits Wnt signaling. The polypeptide is Ribonucleoside-diphosphate reductase subunit M2 (RRM2) (Macaca fascicularis (Crab-eating macaque)).